Consider the following 89-residue polypeptide: Small ribosomal subunit protein uS14 (89 aa).

The protein belongs to the universal ribosomal protein uS14 family. As to quaternary structure, part of the 30S ribosomal subunit. Contacts proteins S3 and S10.

In terms of biological role, binds 16S rRNA, required for the assembly of 30S particles and may also be responsible for determining the conformation of the 16S rRNA at the A site. The chain is Small ribosomal subunit protein uS14 from Chlorobium phaeovibrioides (strain DSM 265 / 1930) (Prosthecochloris vibrioformis (strain DSM 265)).